Reading from the N-terminus, the 231-residue chain is Putative carboxymethylenebutenolidase (231 aa).

Active-site residues include aspartate 169 and histidine 200.

This sequence belongs to the dienelactone hydrolase family.

It carries out the reaction 2-(5-oxo-2,5-dihydrofuran-2-ylidene)acetate + H2O = 4-oxohex-2-enedioate + H(+). The polypeptide is Putative carboxymethylenebutenolidase (Azospirillum brasilense).